The sequence spans 1398 residues: DNA-directed RNA polymerase subunit beta' (1398 aa).

Cys-73, Cys-75, Cys-88, and Cys-91 together coordinate Zn(2+). Asp-464, Asp-466, and Asp-468 together coordinate Mg(2+). Zn(2+) contacts are provided by Cys-823, Cys-897, Cys-904, and Cys-907.

Belongs to the RNA polymerase beta' chain family. The RNAP catalytic core consists of 2 alpha, 1 beta, 1 beta' and 1 omega subunit. When a sigma factor is associated with the core the holoenzyme is formed, which can initiate transcription. Mg(2+) is required as a cofactor. Requires Zn(2+) as cofactor.

It carries out the reaction RNA(n) + a ribonucleoside 5'-triphosphate = RNA(n+1) + diphosphate. Functionally, DNA-dependent RNA polymerase catalyzes the transcription of DNA into RNA using the four ribonucleoside triphosphates as substrates. This Gluconacetobacter diazotrophicus (strain ATCC 49037 / DSM 5601 / CCUG 37298 / CIP 103539 / LMG 7603 / PAl5) protein is DNA-directed RNA polymerase subunit beta'.